The following is a 348-amino-acid chain: Protein pelota homolog (348 aa).

This sequence belongs to the eukaryotic release factor 1 family. Pelota subfamily. In terms of assembly, monomer. Requires a divalent metal cation as cofactor.

Its subcellular location is the cytoplasm. Functionally, may function in recognizing stalled ribosomes, interact with stem-loop structures in stalled mRNA molecules, and effect endonucleolytic cleavage of the mRNA. May play a role in the release non-functional ribosomes and degradation of damaged mRNAs. Has endoribonuclease activity. The protein is Protein pelota homolog of Methanococcus maripaludis (strain C6 / ATCC BAA-1332).